A 351-amino-acid chain; its full sequence is Nicotinate-nucleotide--dimethylbenzimidazole phosphoribosyltransferase (351 aa).

E317 (proton acceptor) is an active-site residue.

Belongs to the CobT family.

It catalyses the reaction 5,6-dimethylbenzimidazole + nicotinate beta-D-ribonucleotide = alpha-ribazole 5'-phosphate + nicotinate + H(+). The protein operates within nucleoside biosynthesis; alpha-ribazole biosynthesis; alpha-ribazole from 5,6-dimethylbenzimidazole: step 1/2. Functionally, catalyzes the synthesis of alpha-ribazole-5'-phosphate from nicotinate mononucleotide (NAMN) and 5,6-dimethylbenzimidazole (DMB). The sequence is that of Nicotinate-nucleotide--dimethylbenzimidazole phosphoribosyltransferase from Pseudomonas putida (strain W619).